The sequence spans 323 residues: Methionyl-tRNA formyltransferase (323 aa).

A (6S)-5,6,7,8-tetrahydrofolate-binding site is contributed by 117–120 (SLLP).

The protein belongs to the Fmt family.

The enzyme catalyses L-methionyl-tRNA(fMet) + (6R)-10-formyltetrahydrofolate = N-formyl-L-methionyl-tRNA(fMet) + (6S)-5,6,7,8-tetrahydrofolate + H(+). Its function is as follows. Attaches a formyl group to the free amino group of methionyl-tRNA(fMet). The formyl group appears to play a dual role in the initiator identity of N-formylmethionyl-tRNA by promoting its recognition by IF2 and preventing the misappropriation of this tRNA by the elongation apparatus. The protein is Methionyl-tRNA formyltransferase of Acidovorax ebreus (strain TPSY) (Diaphorobacter sp. (strain TPSY)).